Reading from the N-terminus, the 223-residue chain is Putative oxidoreductase MT1904 (223 aa).

4-28 (LVTGGDTDLGRTMAEGFRNDGHKVT) contributes to the NADP(+) binding site. Ser128 provides a ligand contact to substrate.

The protein belongs to the short-chain dehydrogenases/reductases (SDR) family.

This chain is Putative oxidoreductase MT1904, found in Mycobacterium tuberculosis (strain CDC 1551 / Oshkosh).